The chain runs to 132 residues: Small ribosomal subunit protein uS8 (132 aa).

It belongs to the universal ribosomal protein uS8 family. In terms of assembly, part of the 30S ribosomal subunit. Contacts proteins S5 and S12.

One of the primary rRNA binding proteins, it binds directly to 16S rRNA central domain where it helps coordinate assembly of the platform of the 30S subunit. The polypeptide is Small ribosomal subunit protein uS8 (Renibacterium salmoninarum (strain ATCC 33209 / DSM 20767 / JCM 11484 / NBRC 15589 / NCIMB 2235)).